A 3432-amino-acid polypeptide reads, in one-letter code: Hybrid signal transduction histidine kinase G (3432 aa).

Composition is skewed to low complexity over residues 44–68 (HFSNSVLNQTTTTTTTTTTTTTTTN), 76–90 (SQLQAQLQSQSQQNN), and 126–145 (QPQQQQQQQASNKSKLSQKQ). 2 disordered regions span residues 44 to 109 (HFSN…TNSS) and 124 to 240 (DDQP…HNIN). Residues 146 to 157 (TSQLNISGNNSG) are compositionally biased toward polar residues. 2 stretches are compositionally biased toward low complexity: residues 165–177 (TISNSNNSINFIH) and 187–238 (KTPI…NNHN). The Protein kinase domain occupies 263-792 (LSFKHGYNSG…YGLKKDLEMF (530 aa)). ATP-binding positions include 269–277 (YNSGLGGNF) and K305. Over residues 399 to 419 (NNNNNNNNSYNNNYNNNNNNN) the composition is skewed to low complexity. Disordered stretches follow at residues 399-426 (NNNNNNNNSYNNNYNNNNNNNGQVTSPI) and 443-542 (FQLN…STPL). A compositionally biased stretch (polar residues) spans 443–467 (FQLNSSTNSTGSPLIITSQPMPFQL). Low complexity predominate over residues 468-479 (NSNSNTTASSSS). Residues 480–490 (PITHSNLNTAI) show a composition bias toward polar residues. Positions 491–508 (TSTTTSNSNSNNNSNNNN) are enriched in low complexity. The span at 509–525 (SGGGGGGGGGGGGGGGT) shows a compositional bias: gly residues. D585 functions as the Proton acceptor; for protein kinase activity in the catalytic mechanism. Positions 863 to 1121 (GKEFIIVSGL…TMKIVLKNLD (259 aa)) are AAA. 871–878 (GLSGVGKT) lines the ATP pocket. 2 disordered regions span residues 1040 to 1077 (NNFSINNNNNNNNGCNNNNNNNNNNINNNNNNNNNNNI) and 1261 to 1290 (TTTTNNNTTNNTNNNNTNNNNNNTNGNNSD). Positions 1261 to 1288 (TTTTNNNTTNNTNNNNTNNNNNNTNGNN) are enriched in low complexity. Transmembrane regions (helical) follow at residues 1567-1587 (VMVIMMPSLYLNNLNVLTLLL) and 1599-1619 (ISSWSSTAFAMFGMVVSIGHF). The TPR repeat unit spans residues 1965–1998 (SQLMLAKAEFERINGNFEQAMEYFSEAISLAQQF). 2 disordered regions span residues 2071 to 2095 (EYSNNNNNNNSNNNNNNANQSQASI) and 2299 to 2349 (GYNN…NNNK). Positions 2073–2095 (SNNNNNNNSNNNNNNANQSQASI) are enriched in low complexity. The region spanning 2215 to 2465 (YFDRLLKRLM…SNARLFIKVN (251 aa)) is the GAF domain. The Histidine kinase domain occupies 2491 to 2769 (NMSHEMRTPL…TFHFCVELGK (279 aa)). H2494 carries the phosphohistidine; by autocatalysis modification. The segment covering 2637 to 2648 (TTTNNKKQLNTD) has biased composition (low complexity). 5 disordered regions span residues 2637–2673 (TTTNNKKQLNTDNDGDDDDDDDNENLDENNEDTSIDL), 2785–2815 (LLNNNNNNNNNNNNNNNNNNNNNNNNNNNNN), 2917–3030 (LSPK…NNNS), 3134–3160 (NNNINNINNNNNKSNSPIPEDSKHSQY), and 3247–3281 (NSISTTSHSSTSTSSSSSSSSSSSSSLSSTTTITT). A compositionally biased stretch (acidic residues) spans 2649–2673 (NDGDDDDDDDNENLDENNEDTSIDL). 3 stretches are compositionally biased toward low complexity: residues 2787–2815 (NNNNNNNNNNNNNNNNNNNNNNNNNNNNN), 2935–3029 (LSSS…HNNN), and 3134–3145 (NNNINNINNNNN). The Response regulatory domain occupies 3305-3424 (KILIVEDNEM…DLRYVINRYG (120 aa)). 4-aspartylphosphate is present on D3356.

Belongs to the protein kinase superfamily. Ser/Thr protein kinase family. In terms of processing, activation probably requires transfer of a phosphate group between a histidine in the kinase core (transmitter) domain and an aspartate of the receiver domain.

The protein localises to the membrane. The enzyme catalyses ATP + protein L-histidine = ADP + protein N-phospho-L-histidine.. It carries out the reaction L-seryl-[protein] + ATP = O-phospho-L-seryl-[protein] + ADP + H(+). It catalyses the reaction L-threonyl-[protein] + ATP = O-phospho-L-threonyl-[protein] + ADP + H(+). Acts as a receptor histidine kinase for a signal transduction pathway. This protein undergoes an ATP-dependent autophosphorylation at a conserved histidine residue in the kinase core, and a phosphoryl group is then transferred to a conserved aspartate residue in the receiver domain. The chain is Hybrid signal transduction histidine kinase G (dhkG) from Dictyostelium discoideum (Social amoeba).